Here is a 327-residue protein sequence, read N- to C-terminus: Phenylalanine--tRNA ligase alpha subunit (327 aa).

Residue Glu-252 participates in Mg(2+) binding.

It belongs to the class-II aminoacyl-tRNA synthetase family. Phe-tRNA synthetase alpha subunit type 1 subfamily. Tetramer of two alpha and two beta subunits. Mg(2+) serves as cofactor.

It localises to the cytoplasm. The catalysed reaction is tRNA(Phe) + L-phenylalanine + ATP = L-phenylalanyl-tRNA(Phe) + AMP + diphosphate + H(+). The sequence is that of Phenylalanine--tRNA ligase alpha subunit from Salmonella newport (strain SL254).